The sequence spans 540 residues: ADP,ATP carrier protein 2 (540 aa).

The next 11 membrane-spanning stretches (helical) occupy residues 24–44 (FSKF…YCLL), 62–82 (VIPF…TMVY), 94–114 (VFYC…VIIY), 151–171 (IYYV…FWGL), 223–243 (SVML…IWLY), 295–315 (LLGL…FEVV), 337–357 (ITTL…GQCI), 367–387 (LVTP…IFAA), 391–411 (ISIF…WTGG), 458–478 (SGGS…AASL), and 480–500 (VIAL…AYIG).

It belongs to the ADP/ATP translocase tlc family.

It is found in the cell membrane. This Chlamydia pneumoniae (Chlamydophila pneumoniae) protein is ADP,ATP carrier protein 2 (tlcB).